Here is a 156-residue protein sequence, read N- to C-terminus: 6,7-dimethyl-8-ribityllumazine synthase (156 aa).

5-amino-6-(D-ribitylamino)uracil contacts are provided by residues Phe23, 57–59, and 81–83; these read AYE and AII. Residue 86-87 participates in (2S)-2-hydroxy-3-oxobutyl phosphate binding; that stretch reads GT. His89 functions as the Proton donor in the catalytic mechanism. Phe114 lines the 5-amino-6-(D-ribitylamino)uracil pocket. Arg128 provides a ligand contact to (2S)-2-hydroxy-3-oxobutyl phosphate.

The protein belongs to the DMRL synthase family.

The catalysed reaction is (2S)-2-hydroxy-3-oxobutyl phosphate + 5-amino-6-(D-ribitylamino)uracil = 6,7-dimethyl-8-(1-D-ribityl)lumazine + phosphate + 2 H2O + H(+). It functions in the pathway cofactor biosynthesis; riboflavin biosynthesis; riboflavin from 2-hydroxy-3-oxobutyl phosphate and 5-amino-6-(D-ribitylamino)uracil: step 1/2. In terms of biological role, catalyzes the formation of 6,7-dimethyl-8-ribityllumazine by condensation of 5-amino-6-(D-ribitylamino)uracil with 3,4-dihydroxy-2-butanone 4-phosphate. This is the penultimate step in the biosynthesis of riboflavin. This is 6,7-dimethyl-8-ribityllumazine synthase from Helicobacter pylori (strain G27).